The primary structure comprises 398 residues: UPF0496 protein At5g66660 (398 aa).

A run of 2 helical transmembrane segments spans residues 240-260 and 263-283; these read VFFATAYVSVLVLSVVATTMS and PVVCAVASGSTAPIEITGKWF.

This sequence belongs to the UPF0496 family.

It localises to the membrane. The protein is UPF0496 protein At5g66660 of Arabidopsis thaliana (Mouse-ear cress).